A 917-amino-acid chain; its full sequence is DNA mismatch repair protein spellchecker 1 (917 aa).

667–674 is a binding site for ATP; it reads GPNMGGKS.

Belongs to the DNA mismatch repair MutS family. In terms of assembly, heterodimer of Msh2/Spel and Msh6.

The protein localises to the nucleus. Its function is as follows. Involved in postreplication mismatch repair. Binds specifically to DNA containing mismatched nucleotides thus providing a target for the excision repair processes characteristic of postreplication mismatch repair. The chain is DNA mismatch repair protein spellchecker 1 (spel1) from Drosophila melanogaster (Fruit fly).